The sequence spans 61 residues: Large ribosomal subunit protein eL37 (61 aa).

Residues Cys-19, Cys-22, Cys-34, and Cys-37 each contribute to the Zn(2+) site. The C4-type zinc finger occupies 19 to 37 (CRRCGRNAYNVSKHYCAAC).

This sequence belongs to the eukaryotic ribosomal protein eL37 family. Zn(2+) serves as cofactor.

In terms of biological role, binds to the 23S rRNA. The sequence is that of Large ribosomal subunit protein eL37 (rpl37e) from Saccharolobus solfataricus (strain ATCC 35092 / DSM 1617 / JCM 11322 / P2) (Sulfolobus solfataricus).